Reading from the N-terminus, the 382-residue chain is 3-dehydroquinate synthase (382 aa).

NAD(+) contacts are provided by residues E81–K86, G115–D119, T139–S140, K152, and K161. The Zn(2+) site is built by E194, H256, and H274.

The protein belongs to the sugar phosphate cyclases superfamily. Dehydroquinate synthase family. The cofactor is Co(2+). Zn(2+) serves as cofactor. Requires NAD(+) as cofactor.

It localises to the cytoplasm. It carries out the reaction 7-phospho-2-dehydro-3-deoxy-D-arabino-heptonate = 3-dehydroquinate + phosphate. It participates in metabolic intermediate biosynthesis; chorismate biosynthesis; chorismate from D-erythrose 4-phosphate and phosphoenolpyruvate: step 2/7. Its function is as follows. Catalyzes the conversion of 3-deoxy-D-arabino-heptulosonate 7-phosphate (DAHP) to dehydroquinate (DHQ). This is 3-dehydroquinate synthase from Bradyrhizobium sp. (strain BTAi1 / ATCC BAA-1182).